A 536-amino-acid polypeptide reads, in one-letter code: Putative ATP-dependent RNA helicase L364 (536 aa).

One can recognise a Helicase ATP-binding domain in the interval 47–214; the sequence is ISILLKYFLV…IPFYLMNFIP (168 aa). Position 60-67 (60-67) interacts with ATP; the sequence is SDTGVGKT. The DEAH box motif lies at 160–163; that stretch reads DESH. A coiled-coil region spans residues 288 to 334; the sequence is LSDDSDKIAEAYEEIAELMRELEEKKTQCKNHLAKIQKLKQEIELRK. Residues 338–486 enclose the Helicase C-terminal domain; that stretch reads FIEQTQLYLE…ISAINDGDLE (149 aa). A disordered region spans residues 502–536; that stretch reads VLNEPVNNPIEEPVNDPVKDPVEDLTDNQPNIVEV.

It belongs to the DEAD box helicase family. DEAH subfamily.

The catalysed reaction is ATP + H2O = ADP + phosphate + H(+). The protein is Putative ATP-dependent RNA helicase L364 of Acanthamoeba polyphaga (Amoeba).